The following is a 360-amino-acid chain: Protein-glutamate methylesterase/protein-glutamine glutaminase 3 (360 aa).

A Response regulatory domain is found at 14–131 (RVLVIDDSAT…AEGVQAYAEE (118 aa)). Asp-65 is subject to 4-aspartylphosphate. The region spanning 169–360 (AGKDGRVVAV…AGKLMELDGA (192 aa)) is the CheB-type methylesterase domain. Active-site residues include Ser-181, His-207, and Asp-303.

The protein belongs to the CheB family. Post-translationally, phosphorylated by CheA. Phosphorylation of the N-terminal regulatory domain activates the methylesterase activity.

Its subcellular location is the cytoplasm. It catalyses the reaction [protein]-L-glutamate 5-O-methyl ester + H2O = L-glutamyl-[protein] + methanol + H(+). It carries out the reaction L-glutaminyl-[protein] + H2O = L-glutamyl-[protein] + NH4(+). In terms of biological role, involved in chemotaxis. Part of a chemotaxis signal transduction system that modulates chemotaxis in response to various stimuli. Catalyzes the demethylation of specific methylglutamate residues introduced into the chemoreceptors (methyl-accepting chemotaxis proteins or MCP) by CheR. Also mediates the irreversible deamidation of specific glutamine residues to glutamic acid. The chain is Protein-glutamate methylesterase/protein-glutamine glutaminase 3 from Burkholderia thailandensis (strain ATCC 700388 / DSM 13276 / CCUG 48851 / CIP 106301 / E264).